A 401-amino-acid chain; its full sequence is Imidazolonepropionase (401 aa).

Residues H70 and H72 each contribute to the Fe(3+) site. Zn(2+) contacts are provided by H70 and H72. 4-imidazolone-5-propanoate contacts are provided by R79, Y142, and H175. Residue Y142 coordinates N-formimidoyl-L-glutamate. A Fe(3+)-binding site is contributed by H240. Zn(2+) is bound at residue H240. Q243 contributes to the 4-imidazolone-5-propanoate binding site. D315 is a Fe(3+) binding site. Zn(2+) is bound at residue D315. 2 residues coordinate N-formimidoyl-L-glutamate: N317 and G319. A 4-imidazolone-5-propanoate-binding site is contributed by S320.

It belongs to the metallo-dependent hydrolases superfamily. HutI family. It depends on Zn(2+) as a cofactor. Requires Fe(3+) as cofactor.

The protein localises to the cytoplasm. It carries out the reaction 4-imidazolone-5-propanoate + H2O = N-formimidoyl-L-glutamate. The protein operates within amino-acid degradation; L-histidine degradation into L-glutamate; N-formimidoyl-L-glutamate from L-histidine: step 3/3. Functionally, catalyzes the hydrolytic cleavage of the carbon-nitrogen bond in imidazolone-5-propanoate to yield N-formimidoyl-L-glutamate. It is the third step in the universal histidine degradation pathway. In Ruegeria pomeroyi (strain ATCC 700808 / DSM 15171 / DSS-3) (Silicibacter pomeroyi), this protein is Imidazolonepropionase.